A 90-amino-acid chain; its full sequence is ATVPAGTSVYQQPAVQYQQYQPYQTVVQSQPQQVVAGRVVPAVYPATVGSQVYPSGVVPATVYNSGIVRNVYPAGVVPAVAGAYQYFPTD.

Its function is as follows. Component of the cuticle of migratory locust which contains more than 100 different structural proteins. The chain is Cuticle protein 9.5 from Locusta migratoria (Migratory locust).